The primary structure comprises 255 residues: Hydroxyacylglutathione hydrolase (255 aa).

The Zn(2+) site is built by His-56, His-58, Asp-60, His-61, His-114, Asp-133, and His-171.

This sequence belongs to the metallo-beta-lactamase superfamily. Glyoxalase II family. In terms of assembly, monomer. Requires Zn(2+) as cofactor.

The catalysed reaction is an S-(2-hydroxyacyl)glutathione + H2O = a 2-hydroxy carboxylate + glutathione + H(+). The protein operates within secondary metabolite metabolism; methylglyoxal degradation; (R)-lactate from methylglyoxal: step 2/2. Its function is as follows. Thiolesterase that catalyzes the hydrolysis of S-D-lactoyl-glutathione to form glutathione and D-lactic acid. The sequence is that of Hydroxyacylglutathione hydrolase from Bradyrhizobium sp. (strain BTAi1 / ATCC BAA-1182).